The following is a 97-amino-acid chain: Large ribosomal subunit protein bL31 (97 aa).

A disordered region spans residues 76-97 (KTPKKAKGKTEEYTKHRSLNEL). The segment covering 83–97 (GKTEEYTKHRSLNEL) has biased composition (basic and acidic residues).

It belongs to the bacterial ribosomal protein bL31 family. Type A subfamily. In terms of assembly, part of the 50S ribosomal subunit.

In terms of biological role, binds the 23S rRNA. This chain is Large ribosomal subunit protein bL31, found in Mycoplasma pneumoniae (strain ATCC 29342 / M129 / Subtype 1) (Mycoplasmoides pneumoniae).